Reading from the N-terminus, the 105-residue chain is UPF0145 protein Ping_0381 (105 aa).

This sequence belongs to the UPF0145 family.

This is UPF0145 protein Ping_0381 from Psychromonas ingrahamii (strain DSM 17664 / CCUG 51855 / 37).